The primary structure comprises 500 residues: Aspartyl/glutamyl-tRNA(Asn/Gln) amidotransferase subunit B (500 aa).

It belongs to the GatB/GatE family. GatB subfamily. In terms of assembly, heterotrimer of A, B and C subunits.

The enzyme catalyses L-glutamyl-tRNA(Gln) + L-glutamine + ATP + H2O = L-glutaminyl-tRNA(Gln) + L-glutamate + ADP + phosphate + H(+). It catalyses the reaction L-aspartyl-tRNA(Asn) + L-glutamine + ATP + H2O = L-asparaginyl-tRNA(Asn) + L-glutamate + ADP + phosphate + 2 H(+). Its function is as follows. Allows the formation of correctly charged Asn-tRNA(Asn) or Gln-tRNA(Gln) through the transamidation of misacylated Asp-tRNA(Asn) or Glu-tRNA(Gln) in organisms which lack either or both of asparaginyl-tRNA or glutaminyl-tRNA synthetases. The reaction takes place in the presence of glutamine and ATP through an activated phospho-Asp-tRNA(Asn) or phospho-Glu-tRNA(Gln). The polypeptide is Aspartyl/glutamyl-tRNA(Asn/Gln) amidotransferase subunit B (Allorhizobium ampelinum (strain ATCC BAA-846 / DSM 112012 / S4) (Agrobacterium vitis (strain S4))).